The chain runs to 267 residues: NAD kinase (267 aa).

Catalysis depends on D45, which acts as the Proton acceptor. Residues 45–46, 123–124, R149, D151, A186, and N226 each bind NAD(+); these read DG and NE.

The protein belongs to the NAD kinase family. A divalent metal cation serves as cofactor.

Its subcellular location is the cytoplasm. It catalyses the reaction NAD(+) + ATP = ADP + NADP(+) + H(+). Its function is as follows. Involved in the regulation of the intracellular balance of NAD and NADP, and is a key enzyme in the biosynthesis of NADP. Catalyzes specifically the phosphorylation on 2'-hydroxyl of the adenosine moiety of NAD to yield NADP. This is NAD kinase from Shouchella clausii (strain KSM-K16) (Alkalihalobacillus clausii).